Here is a 529-residue protein sequence, read N- to C-terminus: ADP,ATP carrier protein 1 (529 aa).

Helical transmembrane passes span 24 to 44 (LKKV…YTIL), 63 to 83 (IPFI…LIYA), 93 to 113 (ALFY…PLVI), 124 to 144 (DFAD…IAML), 149 to 169 (FAAF…LMFW), 184 to 204 (FYAL…PAIV), 220 to 240 (WGVT…IIAA), 284 to 304 (YMLL…LVEV), 322 to 342 (AFMG…MLFI), 356 to 376 (ALVT…LVIF), 381 to 401 (TGLV…VGAV), and 463 to 483 (ISAM…VWLT). Positions 509–520 (AAEKEASPAAKE) are enriched in low complexity. A disordered region spans residues 509–529 (AAEKEASPAAKEVSPAIEGVS).

Belongs to the ADP/ATP translocase tlc family.

Its subcellular location is the cell membrane. The sequence is that of ADP,ATP carrier protein 1 (tlcA) from Chlamydia muridarum (strain MoPn / Nigg).